The sequence spans 389 residues: Putative nickel insertion protein (389 aa).

It belongs to the LarC family.

The polypeptide is Putative nickel insertion protein (Desulfotalea psychrophila (strain LSv54 / DSM 12343)).